The primary structure comprises 161 residues: Vasotocin-neurophysin VT (161 aa).

An N-terminal signal peptide occupies residues 1–22 (MSAMGWTLLAAALLAISAQSNG). An intrachain disulfide couples Cys-23 to Cys-28. The residue at position 31 (Gly-31) is a Glycine amide. Disulfide bonds link Cys-43/Cys-91, Cys-46/Cys-58, Cys-52/Cys-81, Cys-59/Cys-71, Cys-99/Cys-111, Cys-105/Cys-123, and Cys-112/Cys-117.

The protein belongs to the vasopressin/oxytocin family.

The protein resides in the secreted. Functionally, vasotocin is an antidiuretic hormone. The polypeptide is Vasotocin-neurophysin VT (Eptatretus stoutii (Pacific hagfish)).